We begin with the raw amino-acid sequence, 425 residues long: Adenosylhomocysteinase (425 aa).

Substrate is bound by residues Thr60, Asp132, and Glu157. 158–160 contributes to the NAD(+) binding site; the sequence is TTT. 2 residues coordinate substrate: Lys187 and Asp191. NAD(+) contacts are provided by residues Asn192, 221–226, Glu244, Asn279, 300–302, and Asn347; these read GYGWCG and SGH.

This sequence belongs to the adenosylhomocysteinase family. The cofactor is NAD(+).

It is found in the cytoplasm. The catalysed reaction is S-adenosyl-L-homocysteine + H2O = L-homocysteine + adenosine. Its pathway is amino-acid biosynthesis; L-homocysteine biosynthesis; L-homocysteine from S-adenosyl-L-homocysteine: step 1/1. In terms of biological role, may play a key role in the regulation of the intracellular concentration of adenosylhomocysteine. The protein is Adenosylhomocysteinase of Synechocystis sp. (strain ATCC 27184 / PCC 6803 / Kazusa).